The chain runs to 173 residues: Lectin BRA-2 (173 aa).

Asn-39 carries N-linked (GlcNAc...) asparagine glycosylation. Disulfide bonds link Cys-47/Cys-61, Cys-78/Cys-168, and Cys-144/Cys-160. A C-type lectin domain is found at 51–170 (PNGWVTSENK…NDRYNFVCEI (120 aa)).

Homohexamer; disulfide-linked. As to expression, coelemic fluid.

Sugar-binding protein which recognizes specific carbohydrate structures and agglutinates a variety of animal cells by binding to cell-surface glycoproteins and glycolipids. Calcium-dependent lectin. Invertebrate lectins may be involved in defense functions. The protein is Lectin BRA-2 of Megabalanus rosa (Acorn barnacle).